We begin with the raw amino-acid sequence, 493 residues long: Glycylpeptide N-tetradecanoyltransferase (493 aa).

Residue 45-48 (HKFW) coordinates tetradecanoyl-CoA. A disordered region spans residues 53–73 (VPQITGSGAPAPIEEGPIDDP). Tetradecanoyl-CoA-binding positions include 182–184 (LCV) and 190–194 (SKRLA). The active-site Proton acceptor; via carboxylate is Leu-493.

Belongs to the NMT family. In terms of assembly, monomer.

The protein localises to the cytoplasm. The catalysed reaction is N-terminal glycyl-[protein] + tetradecanoyl-CoA = N-tetradecanoylglycyl-[protein] + CoA + H(+). Functionally, adds a myristoyl group to the N-terminal glycine residue of certain cellular proteins. This Cryptococcus neoformans var. neoformans serotype D (strain B-3501A) (Filobasidiella neoformans) protein is Glycylpeptide N-tetradecanoyltransferase.